Reading from the N-terminus, the 468-residue chain is Adenylosuccinate synthetase (468 aa).

GTP-binding positions include 23-29 (GDEGKGK) and 51-53 (GHE). Catalysis depends on Asp-24, which acts as the Proton acceptor. Mg(2+) is bound by residues Asp-24 and Gly-51. Residues 24 to 27 (DEGK), 49 to 52 (NSGH), Thr-142, Arg-156, Asn-238, Thr-253, and Arg-317 contribute to the IMP site. Residue His-52 is the Proton donor of the active site. 313–319 (VTTGRTR) lines the substrate pocket. GTP contacts are provided by residues Arg-319 and 345–347 (KLD).

The protein belongs to the adenylosuccinate synthetase family. In terms of assembly, homodimer. It depends on Mg(2+) as a cofactor.

The protein resides in the cytoplasm. It carries out the reaction IMP + L-aspartate + GTP = N(6)-(1,2-dicarboxyethyl)-AMP + GDP + phosphate + 2 H(+). It functions in the pathway purine metabolism; AMP biosynthesis via de novo pathway; AMP from IMP: step 1/2. Functionally, plays an important role in the salvage pathway for purine nucleotide biosynthesis. Catalyzes the first committed step in the biosynthesis of AMP from IMP. This Theileria annulata protein is Adenylosuccinate synthetase.